Consider the following 1628-residue polypeptide: Centrosomal protein of 170 kDa protein B (1628 aa).

In terms of domain architecture, FHA spans Ile23–Ile73. Disordered stretches follow at residues Glu136–Gln201, Leu329–Pro369, Pro415–Tyr504, Ser566–Thr586, Leu637–Asn659, Glu719–Leu739, Glu758–Thr842, Val1005–Thr1084, Thr1100–Gln1341, Ala1379–Ser1405, Gly1443–Lys1463, and His1560–Val1628. Composition is skewed to basic and acidic residues over residues Lys147–Thr156 and Lys180–Gln201. The span at Gln421–Thr434 shows a compositional bias: polar residues. The segment covering Pro436 to Lys453 has biased composition (basic and acidic residues). Polar residues predominate over residues Val454–Asn479. Residues Phe481–Ile490 show a composition bias toward basic and acidic residues. Basic and acidic residues-rich tracts occupy residues Glu758–Glu773 and Trp817–Ser828. Polar residues predominate over residues Val1005–Val1023. Positions Ala1045–Val1056 are enriched in basic and acidic residues. Residues Arg1129–Arg1150 are compositionally biased toward polar residues. Residues Ser1176–Ser1193 show a composition bias toward low complexity. A compositionally biased stretch (polar residues) spans Asn1216 to Val1227. 3 stretches are compositionally biased toward low complexity: residues Thr1261 to Thr1280, Ala1312 to Gln1328, and Asp1381 to Ser1398. Positions Pro1564 to Pro1596 are enriched in polar residues. Positions Ser1606–Phe1618 are enriched in low complexity.

Belongs to the CEP170 family.

It is found in the cytoplasm. The protein resides in the cytoskeleton. Functionally, plays a role in microtubule organization. The polypeptide is Centrosomal protein of 170 kDa protein B (cep170b) (Xenopus tropicalis (Western clawed frog)).